A 343-amino-acid chain; its full sequence is Methionine import ATP-binding protein MetN (343 aa).

Residues 2–241 (IKLSNITKVF…PKTPLAQKFI (240 aa)) form the ABC transporter domain. Residue 38–45 (GASGAGKS) participates in ATP binding.

The protein belongs to the ABC transporter superfamily. Methionine importer (TC 3.A.1.24) family. In terms of assembly, the complex is composed of two ATP-binding proteins (MetN), two transmembrane proteins (MetI) and a solute-binding protein (MetQ).

The protein resides in the cell inner membrane. It carries out the reaction L-methionine(out) + ATP + H2O = L-methionine(in) + ADP + phosphate + H(+). The enzyme catalyses D-methionine(out) + ATP + H2O = D-methionine(in) + ADP + phosphate + H(+). In terms of biological role, part of the ABC transporter complex MetNIQ involved in methionine import. Responsible for energy coupling to the transport system. In Shigella boydii serotype 4 (strain Sb227), this protein is Methionine import ATP-binding protein MetN.